A 691-amino-acid chain; its full sequence is Mediator of RNA polymerase II transcription subunit 17 (691 aa).

Residues 158-185 adopt a coiled-coil conformation; sequence KLESFDAAANKLLQSAQRLEEDIAAETK.

Belongs to the Mediator complex subunit 17 family. Component of the Mediator complex.

The protein resides in the nucleus. Functionally, component of the Mediator complex, a coactivator involved in the regulated transcription of nearly all RNA polymerase II-dependent genes. Mediator functions as a bridge to convey information from gene-specific regulatory proteins to the basal RNA polymerase II transcription machinery. Mediator is recruited to promoters by direct interactions with regulatory proteins and serves as a scaffold for the assembly of a functional preinitiation complex with RNA polymerase II and the general transcription factors. This is Mediator of RNA polymerase II transcription subunit 17 (SRB4) from Coccidioides immitis (strain RS) (Valley fever fungus).